A 119-amino-acid polypeptide reads, in one-letter code: Protein TusC (119 aa).

It belongs to the DsrF/TusC family. As to quaternary structure, heterohexamer, formed by a dimer of trimers. The hexameric TusBCD complex contains 2 copies each of TusB, TusC and TusD. The TusBCD complex interacts with TusE.

It localises to the cytoplasm. In terms of biological role, part of a sulfur-relay system required for 2-thiolation of 5-methylaminomethyl-2-thiouridine (mnm(5)s(2)U) at tRNA wobble positions. The sequence is that of Protein TusC from Buchnera aphidicola subsp. Acyrthosiphon pisum (strain APS) (Acyrthosiphon pisum symbiotic bacterium).